The sequence spans 103 residues: MTKFENVTVVKKANIYDGGKVTSRTVEFADGTRKTLGIMMPGEYTFNTAEAEIMEMMSGELDIRLPNEDWKTLNTPESFNVPANSSFDLKIRTVTDYCCSYIK.

This sequence belongs to the nucleoside phosphorylase PpnP family.

The enzyme catalyses a purine D-ribonucleoside + phosphate = a purine nucleobase + alpha-D-ribose 1-phosphate. The catalysed reaction is adenosine + phosphate = alpha-D-ribose 1-phosphate + adenine. It catalyses the reaction cytidine + phosphate = cytosine + alpha-D-ribose 1-phosphate. It carries out the reaction guanosine + phosphate = alpha-D-ribose 1-phosphate + guanine. The enzyme catalyses inosine + phosphate = alpha-D-ribose 1-phosphate + hypoxanthine. The catalysed reaction is thymidine + phosphate = 2-deoxy-alpha-D-ribose 1-phosphate + thymine. It catalyses the reaction uridine + phosphate = alpha-D-ribose 1-phosphate + uracil. It carries out the reaction xanthosine + phosphate = alpha-D-ribose 1-phosphate + xanthine. Functionally, catalyzes the phosphorolysis of diverse nucleosides, yielding D-ribose 1-phosphate and the respective free bases. Can use uridine, adenosine, guanosine, cytidine, thymidine, inosine and xanthosine as substrates. Also catalyzes the reverse reactions. The chain is Pyrimidine/purine nucleoside phosphorylase from Sulfurimonas denitrificans (strain ATCC 33889 / DSM 1251) (Thiomicrospira denitrificans (strain ATCC 33889 / DSM 1251)).